We begin with the raw amino-acid sequence, 422 residues long: Adhesin YadA (422 aa).

The first 25 residues, methionine 1–alanine 25, serve as a signal peptide directing secretion. The segment at asparagine 26 to tyrosine 330 is surface exposed passenger domain. The stretch at valine 206–tyrosine 236 forms a coiled coil. The outer membrane translocation of the passenger domain stretch occupies residues threonine 331–valine 368. 4 beta stranded membrane passes run glycine 369–glycine 379, serine 383–valine 394, lysine 401–alanine 407, and aspartate 411–tryptophan 422. A translocator domain region spans residues glycine 369 to tryptophan 422.

This sequence belongs to the autotransporter-2 (AT-2) (TC 1.B.40) family. As to quaternary structure, homotrimer; trimers are very stable, not disrupted by heating at 95 degrees Celsius for 10 minutes in SDS sample buffer.

The protein resides in the cell surface. Its subcellular location is the cell outer membrane. Its function is as follows. Collagen-binding outer membrane protein forming a fibrillar matrix on the bacterial cell surface and phagocytosis resistance. Promotes initial attachment and invasion of eukaryotic cells. Also protects the bacteria by being responsible for agglutination, serum resistance and complement inactivation. Gly-389 plays an important role in this protein; replacing it with increasingly large polar residues decreases expression levels and trimer stability. Residues larger than Ser (Thr, Asn or His) significantly decrease serume resistance and bacterial autoagglution without affecting adhesion to host cells or host cell cytokine production. In Yersinia enterocolitica serotype O:8 / biotype 1B (strain NCTC 13174 / 8081), this protein is Adhesin YadA.